A 403-amino-acid polypeptide reads, in one-letter code: Alkaline protease 1 (403 aa).

Positions 1 to 21 are cleaved as a signal peptide; sequence MLSIKRTLLLLGAVLPAVFGA. A propeptide spanning residues 22–125 is cleaved from the precursor; the sequence is PVQETRRAAQ…QIWYLDALTT (104 aa). The 85-residue stretch at 36–120 folds into the Inhibitor I9 domain; sequence KYIVTFKPGT…HVEEDQIWYL (85 aa). Positions 130–403 constitute a Peptidase S8 domain; it reads PWGLGSISHK…PNKLAYNGNA (274 aa). Active-site charge relay system residues include Asp162 and His193. 2 N-linked (GlcNAc...) asparagine glycosylation sites follow: Asn253 and Asn307. Residue Ser349 is the Charge relay system of the active site. The N-linked (GlcNAc...) asparagine glycan is linked to Asn367.

This sequence belongs to the peptidase S8 family.

Its subcellular location is the secreted. It carries out the reaction Hydrolysis of proteins with broad specificity, and of Bz-Arg-OEt &gt; Ac-Tyr-OEt. Does not hydrolyze peptide amides.. Secreted alkaline protease that allows assimilation of proteinaceous substrates. Acts as a significant virulence factor in invasive aspergillosis. Involved in immune evasion from the human and mice complement systems during infection. Efficiently cleaves important components of the complement cascade such as such as C3, C4, C5, and C1q, as well as IgG, which leads to down-regulation of complement activation at the hyphal surface. This is Alkaline protease 1 (alp1) from Aspergillus fumigatus (strain CBS 144.89 / FGSC A1163 / CEA10) (Neosartorya fumigata).